Consider the following 702-residue polypeptide: Arginine decarboxylase 1 (702 aa).

K151 carries the post-translational modification N6-(pyridoxal phosphate)lysine. Residue 336-346 participates in substrate binding; sequence IDVGGGLGIDY. The span at 668-686 shows a compositional bias: low complexity; sequence ASGESSGMSSDSEGSAAGA. The disordered stretch occupies residues 668–702; it reads ASGESSGMSSDSEGSAAGAAEEDDDEWEFMRGLTV.

The protein belongs to the Orn/Lys/Arg decarboxylase class-II family. SpeA subfamily. Pyridoxal 5'-phosphate is required as a cofactor. Mg(2+) serves as cofactor. Expressed in roots, leaves and stems (at protein level).

The catalysed reaction is L-arginine + H(+) = agmatine + CO2. It functions in the pathway amine and polyamine biosynthesis; agmatine biosynthesis; agmatine from L-arginine: step 1/1. The polypeptide is Arginine decarboxylase 1 (ADC1) (Oryza sativa subsp. japonica (Rice)).